The primary structure comprises 447 residues: Kynurenine 3-monooxygenase (447 aa).

This sequence belongs to the aromatic-ring hydroxylase family. KMO subfamily. The cofactor is FAD.

The catalysed reaction is L-kynurenine + NADPH + O2 + H(+) = 3-hydroxy-L-kynurenine + NADP(+) + H2O. It functions in the pathway cofactor biosynthesis; NAD(+) biosynthesis; quinolinate from L-kynurenine: step 1/3. In terms of biological role, catalyzes the hydroxylation of L-kynurenine (L-Kyn) to form 3-hydroxy-L-kynurenine (L-3OHKyn). Required for synthesis of quinolinic acid. The protein is Kynurenine 3-monooxygenase of Christiangramia forsetii (strain DSM 17595 / CGMCC 1.15422 / KT0803) (Gramella forsetii).